A 253-amino-acid chain; its full sequence is Ditrans,polycis-undecaprenyl-diphosphate synthase ((2E,6E)-farnesyl-diphosphate specific) (253 aa).

Residue Asp-25 is part of the active site. Asp-25 serves as a coordination point for Mg(2+). Substrate contacts are provided by residues 26–29, Trp-30, Arg-38, His-42, and 70–72; these read GNGR and SSE. Asn-73 functions as the Proton acceptor in the catalytic mechanism. The substrate site is built by Trp-74, Arg-76, and Arg-193. His-198 serves as a coordination point for Mg(2+). Residue 199–201 participates in substrate binding; it reads RIS. Glu-212 lines the Mg(2+) pocket.

The protein belongs to the UPP synthase family. In terms of assembly, homodimer. It depends on Mg(2+) as a cofactor.

The catalysed reaction is 8 isopentenyl diphosphate + (2E,6E)-farnesyl diphosphate = di-trans,octa-cis-undecaprenyl diphosphate + 8 diphosphate. Its function is as follows. Catalyzes the sequential condensation of isopentenyl diphosphate (IPP) with (2E,6E)-farnesyl diphosphate (E,E-FPP) to yield (2Z,6Z,10Z,14Z,18Z,22Z,26Z,30Z,34E,38E)-undecaprenyl diphosphate (di-trans,octa-cis-UPP). UPP is the precursor of glycosyl carrier lipid in the biosynthesis of bacterial cell wall polysaccharide components such as peptidoglycan and lipopolysaccharide. The protein is Ditrans,polycis-undecaprenyl-diphosphate synthase ((2E,6E)-farnesyl-diphosphate specific) of Pectobacterium atrosepticum (strain SCRI 1043 / ATCC BAA-672) (Erwinia carotovora subsp. atroseptica).